Consider the following 631-residue polypeptide: Replication protein E1 (631 aa).

A disordered region spans residues 28-48 (TGDIISEDETEEDEGTASDLD). Residues 32-43 (ISEDETEEDEGT) are compositionally biased toward acidic residues. A Nuclear localization signal motif is present at residues 86-88 (KRK). Phosphoserine; by host is present on Ser-92. The tract at residues 168–334 (IGATPPQQIQ…QTQIQHSFQD (167 aa)) is DNA-binding region. Residues 433-583 (VDFISFLSYF…FPIDTNGNPV (151 aa)) form the SF3 helicase domain. ATP is bound at residue 459-466 (GPPNTGKS). A Glycyl lysine isopeptide (Lys-Gly) (interchain with G-Cter in SUMO) cross-link involves residue Lys-540.

This sequence belongs to the papillomaviridae E1 protein family. In terms of assembly, can form hexamers. Interacts with E2 protein; this interaction increases E1 DNA binding specificity. Interacts with host DNA polymerase subunit POLA2. Interacts with host single stranded DNA-binding protein RPA1. Interacts with host TOP1; this interaction stimulates the enzymatic activity of TOP1. Phosphorylated. In terms of processing, sumoylated.

It localises to the host nucleus. It carries out the reaction Couples ATP hydrolysis with the unwinding of duplex DNA by translocating in the 3'-5' direction.. It catalyses the reaction ATP + H2O = ADP + phosphate + H(+). Its function is as follows. ATP-dependent DNA 3'-5' helicase required for initiation of viral DNA replication. It forms a complex with the viral E2 protein. The E1-E2 complex binds to the replication origin which contains binding sites for both proteins. During the initial step, a dimer of E1 interacts with a dimer of protein E2 leading to a complex that binds the viral origin of replication with high specificity. Then, a second dimer of E1 displaces the E2 dimer in an ATP-dependent manner to form the E1 tetramer. Following this, two E1 monomers are added to each half of the site, which results in the formation of two E1 trimers on the viral ori. Subsequently, two hexamers will be created. The double hexamer acts as a bi-directional helicase machinery and unwinds the viral DNA and then recruits the host DNA polymerase to start replication. This chain is Replication protein E1, found in Homo sapiens (Human).